The following is a 520-amino-acid chain: GMP synthase [glutamine-hydrolyzing] (520 aa).

Residues 13–205 form the Glutamine amidotransferase type-1 domain; it reads KIIVLDYGSQ…ALNICKAKGD (193 aa). Cys90 acts as the Nucleophile in catalysis. Catalysis depends on residues His179 and Glu181. In terms of domain architecture, GMPS ATP-PPase spans 206–395; the sequence is WSMDNFIDMQ…LGMPDHIVWR (190 aa). An ATP-binding site is contributed by 233–239; sequence SGGVDSS.

In terms of assembly, homodimer.

It carries out the reaction XMP + L-glutamine + ATP + H2O = GMP + L-glutamate + AMP + diphosphate + 2 H(+). Its pathway is purine metabolism; GMP biosynthesis; GMP from XMP (L-Gln route): step 1/1. Catalyzes the synthesis of GMP from XMP. The sequence is that of GMP synthase [glutamine-hydrolyzing] from Streptococcus pneumoniae (strain CGSP14).